We begin with the raw amino-acid sequence, 183 residues long: Translation initiation factor IF-3 (183 aa).

This sequence belongs to the IF-3 family. In terms of assembly, monomer.

It is found in the cytoplasm. IF-3 binds to the 30S ribosomal subunit and shifts the equilibrium between 70S ribosomes and their 50S and 30S subunits in favor of the free subunits, thus enhancing the availability of 30S subunits on which protein synthesis initiation begins. This is Translation initiation factor IF-3 from Serratia marcescens.